We begin with the raw amino-acid sequence, 522 residues long: 2-isopropylmalate synthase (522 aa).

The 263-residue stretch at 5-267 (VIIFDTTLRD…ETGINAKEIH (263 aa)) folds into the Pyruvate carboxyltransferase domain. Positions 14, 202, 204, and 238 each coordinate Mn(2+). The regulatory domain stretch occupies residues 392–522 (QLQQLVVQSD…MHKNRELGGV (131 aa)).

Belongs to the alpha-IPM synthase/homocitrate synthase family. LeuA type 1 subfamily. As to quaternary structure, homodimer. Requires Mn(2+) as cofactor.

It is found in the cytoplasm. The catalysed reaction is 3-methyl-2-oxobutanoate + acetyl-CoA + H2O = (2S)-2-isopropylmalate + CoA + H(+). The protein operates within amino-acid biosynthesis; L-leucine biosynthesis; L-leucine from 3-methyl-2-oxobutanoate: step 1/4. Its function is as follows. Catalyzes the condensation of the acetyl group of acetyl-CoA with 3-methyl-2-oxobutanoate (2-ketoisovalerate) to form 3-carboxy-3-hydroxy-4-methylpentanoate (2-isopropylmalate). In Shewanella sp. (strain MR-7), this protein is 2-isopropylmalate synthase.